Here is a 1492-residue protein sequence, read N- to C-terminus: DNA-directed RNA polymerase subunit beta' (1492 aa).

Cys-67, Cys-69, Cys-82, and Cys-85 together coordinate Zn(2+). Asp-499, Asp-501, and Asp-503 together coordinate Mg(2+). Zn(2+) is bound by residues Cys-867, Cys-943, Cys-950, and Cys-953.

Belongs to the RNA polymerase beta' chain family. In terms of assembly, the RNAP catalytic core consists of 2 alpha, 1 beta, 1 beta' and 1 omega subunit. When a sigma factor is associated with the core the holoenzyme is formed, which can initiate transcription. Mg(2+) serves as cofactor. Zn(2+) is required as a cofactor.

The enzyme catalyses RNA(n) + a ribonucleoside 5'-triphosphate = RNA(n+1) + diphosphate. DNA-dependent RNA polymerase catalyzes the transcription of DNA into RNA using the four ribonucleoside triphosphates as substrates. The protein is DNA-directed RNA polymerase subunit beta' of Chlorobium phaeobacteroides (strain DSM 266 / SMG 266 / 2430).